Reading from the N-terminus, the 807-residue chain is Lysyl oxidase homolog 3B (807 aa).

An N-terminal signal peptide occupies residues 1 to 24 (MELHQWCRHIIVFLLNVWIPSCFA). SRCR domains follow at residues 49–150 (FRLS…VICK), 175–288 (VRLR…VSCV), 309–409 (TRLK…VRCN), 419–470 (VRIL…LGYA), and 476–579 (VRLS…VICS). Intrachain disulfides connect C75-C139, C88-C149, C119-C129, C207-C277, C220-C287, C254-C264, C334-C398, C347-C408, and C378-C388. N-linked (GlcNAc...) asparagine glycosylation occurs at N272. A glycan (N-linked (GlcNAc...) asparagine) is linked at N392. 2 disulfide bridges follow: C514–C578 and C547–C557. The N-linked (GlcNAc...) asparagine glycan is linked to N536. A glycan (N-linked (GlcNAc...) asparagine) is linked at N679. The lysine tyrosylquinone (Lys-Tyr) cross-link spans 688–724 (KASFCLEDTDCDEGVSKRYKCANFGEQGITVGCWDLY). Residue Y724 is modified to 2',4',5'-topaquinone.

It belongs to the lysyl oxidase family. Cu cation is required as a cofactor. Requires lysine tyrosylquinone residue as cofactor. In terms of processing, the lysine tyrosylquinone cross-link (LTQ) is generated by condensation of the epsilon-amino group of a lysine with a topaquinone produced by oxidation of tyrosine.

It is found in the secreted. It localises to the extracellular space. Its subcellular location is the cytoplasm. The protein resides in the nucleus. The enzyme catalyses L-lysyl-[protein] + O2 + H2O = (S)-2-amino-6-oxohexanoyl-[protein] + H2O2 + NH4(+). The catalysed reaction is N(6)-acetyl-L-lysyl-[protein] + O2 + H2O = acetamide + (S)-2-amino-6-oxohexanoyl-[protein] + H2O2. In terms of biological role, protein-lysine 6-oxidase that mediates the oxidation of peptidyl lysine residues to allysine in target proteins. Catalyzes the post-translational oxidative deamination of peptidyl lysine residues in precursors of elastin and different types of collagens, a prerequisite in the formation of cross-links between collagens and elastin. Can mediate oxidation of lysine residues that are acetylated. Also able to catalyze deacetylation of lysine residues. Required for maturation of neural crest derived cartilage elements. The polypeptide is Lysyl oxidase homolog 3B (Danio rerio (Zebrafish)).